Here is a 229-residue protein sequence, read N- to C-terminus: Ribulose-phosphate 3-epimerase (229 aa).

Ser13 is a binding site for substrate. Positions 36, 38, and 69 each coordinate a divalent metal cation. Asp38 acts as the Proton acceptor in catalysis. Substrate is bound by residues His69, 145-148 (GFGG), 178-180 (DGG), and 200-201 (GS). Asp178 contributes to the a divalent metal cation binding site. Asp178 functions as the Proton donor in the catalytic mechanism.

Belongs to the ribulose-phosphate 3-epimerase family. It depends on a divalent metal cation as a cofactor.

The enzyme catalyses D-ribulose 5-phosphate = D-xylulose 5-phosphate. Its pathway is carbohydrate degradation. Functionally, catalyzes the reversible epimerization of D-ribulose 5-phosphate to D-xylulose 5-phosphate. This Mycobacterium bovis (strain ATCC BAA-935 / AF2122/97) protein is Ribulose-phosphate 3-epimerase.